The chain runs to 609 residues: Glutamine--fructose-6-phosphate aminotransferase [isomerizing] (609 aa).

Catalysis depends on C2, which acts as the Nucleophile; for GATase activity. The Glutamine amidotransferase type-2 domain maps to 2–217 (CGIVGAIAGR…DGDTAEIRRD (216 aa)). SIS domains follow at residues 285 to 425 (AESV…LRGA) and 458 to 599 (WAEC…VDKP). K604 acts as the For Fru-6P isomerization activity in catalysis.

As to quaternary structure, homodimer.

The protein localises to the cytoplasm. The catalysed reaction is D-fructose 6-phosphate + L-glutamine = D-glucosamine 6-phosphate + L-glutamate. Functionally, catalyzes the first step in hexosamine metabolism, converting fructose-6P into glucosamine-6P using glutamine as a nitrogen source. In Xylella fastidiosa (strain 9a5c), this protein is Glutamine--fructose-6-phosphate aminotransferase [isomerizing].